The sequence spans 92 residues: Small ribosomal subunit protein bS20 (92 aa).

The span at 1-21 shows a compositional bias: basic and acidic residues; sequence MPLHKSAEKRLRQAARRNERN. 2 disordered regions span residues 1-26 and 73-92; these read MPLH…ARKK and ASRK…PTAS. Residues 82 to 92 are compositionally biased toward polar residues; it reads KALNNYTPTAS.

Belongs to the bacterial ribosomal protein bS20 family.

Functionally, binds directly to 16S ribosomal RNA. The chain is Small ribosomal subunit protein bS20 from Chlorobaculum tepidum (strain ATCC 49652 / DSM 12025 / NBRC 103806 / TLS) (Chlorobium tepidum).